Consider the following 383-residue polypeptide: Pantothenate kinase 1 (383 aa).

It belongs to the type II pantothenate kinase family. In terms of tissue distribution, highly expressed in leaves and developing seeds. Expressed in roots, stems and flowers.

It catalyses the reaction (R)-pantothenate + ATP = (R)-4'-phosphopantothenate + ADP + H(+). It participates in cofactor biosynthesis; coenzyme A biosynthesis; CoA from (R)-pantothenate: step 1/5. With respect to regulation, regulated by feedback inhibition by malonyl-CoA. Its function is as follows. Catalyzes the phosphorylation of pantothenate the first step in CoA biosynthesis. May play a role in the physiological regulation of the intracellular CoA concentration. Functionally redudant with PANK2. The polypeptide is Pantothenate kinase 1 (PANK1) (Arabidopsis thaliana (Mouse-ear cress)).